The chain runs to 602 residues: 4-hydroxy-3-methylbut-2-en-1-yl diphosphate synthase (flavodoxin) (602 aa).

4 residues coordinate [4Fe-4S] cluster: Cys-508, Cys-511, Cys-543, and Glu-550.

It belongs to the IspG family. It depends on [4Fe-4S] cluster as a cofactor.

It catalyses the reaction (2E)-4-hydroxy-3-methylbut-2-enyl diphosphate + oxidized [flavodoxin] + H2O + 2 H(+) = 2-C-methyl-D-erythritol 2,4-cyclic diphosphate + reduced [flavodoxin]. It participates in isoprenoid biosynthesis; isopentenyl diphosphate biosynthesis via DXP pathway; isopentenyl diphosphate from 1-deoxy-D-xylulose 5-phosphate: step 5/6. In terms of biological role, converts 2C-methyl-D-erythritol 2,4-cyclodiphosphate (ME-2,4cPP) into 1-hydroxy-2-methyl-2-(E)-butenyl 4-diphosphate. The polypeptide is 4-hydroxy-3-methylbut-2-en-1-yl diphosphate synthase (flavodoxin) (Chlamydia trachomatis serovar L2 (strain ATCC VR-902B / DSM 19102 / 434/Bu)).